The following is an 82-amino-acid chain: Small ribosomal subunit protein bS16 (82 aa).

This sequence belongs to the bacterial ribosomal protein bS16 family.

This is Small ribosomal subunit protein bS16 from Deinococcus deserti (strain DSM 17065 / CIP 109153 / LMG 22923 / VCD115).